A 540-amino-acid polypeptide reads, in one-letter code: Flavin-dependent halogenase ptaM (540 aa).

The first 21 residues, 1–21 (MSVPAQTSVLIVGGGPAGSYA), serve as a signal peptide directing secretion. FAD contacts are provided by Gly-14, Ala-17, and Glu-47. Asn-159, Asn-192, Asn-204, and Asn-243 each carry an N-linked (GlcNAc...) asparagine glycan. Ser-330 and Gly-331 together coordinate chloride. 3 N-linked (GlcNAc...) asparagine glycosylation sites follow: Asn-480, Asn-491, and Asn-523.

This sequence belongs to the flavin-dependent halogenase family.

The protein operates within secondary metabolite biosynthesis. Functionally, flavin-dependent halogenase; part of the gene cluster that mediates the biosynthesis of pestheic acid, a diphenyl ether which is a biosynthetic precursor of the unique chloropupukeananes. The biosynthesis initiates from condensation of acetate and malonate units catalyzed by the non-reducing PKS ptaA. As the ptaA protein is TE/CLC domain-deficient, hydrolysis and Claisen cyclization of the polyketide could be catalyzed by ptaB containing a beta-lactamase domain. The ptaB protein might hydrolyze the thioester bond between the ACP of ptaA and the intermediate to release atrochrysone carboxylic acid, which is spontaneously dehydrated to form endocrocin anthrone. Endocrocin anthrone is then converted to endocrocin, catalyzed by the anthrone oxygenase ptaC. Spontaneous decarboxylation of endocrocin occurs to generate emodin. An O-methyltransferase (ptaH or ptaI) could methylate emodin to form physcion. PtaJ could then catalyze the oxidative cleavage of physcion, and rotation of the intermediate could then afford desmethylisosulochrin. PtaF, a putative NADH-dependent oxidoreductase, might also participate in the oxidative cleavage step. Desmethylisosulochrin is then transformed by another O-methyltransferase (ptaH or ptaI) to form isosulochrin. Chlorination of isosulochrin by ptaM in the cyclohexadienone B ring then produces chloroisosulochrin. PtaE is responsible for the oxidative coupling reactions of both benzophenones isosulochrin and chloroisosulochrin to RES-1214-1 and pestheic acid respectively, regardless of chlorination. This Pestalotiopsis fici (strain W106-1 / CGMCC3.15140) protein is Flavin-dependent halogenase ptaM.